A 91-amino-acid chain; its full sequence is Acylphosphatase (91 aa).

One can recognise an Acylphosphatase-like domain in the interval 5 to 91 (CLHAYVGGRV…QGIAGFVVRR (87 aa)). Catalysis depends on residues Arg-20 and Asn-38.

This sequence belongs to the acylphosphatase family.

It carries out the reaction an acyl phosphate + H2O = a carboxylate + phosphate + H(+). The sequence is that of Acylphosphatase (acyP) from Pseudomonas aeruginosa (strain ATCC 15692 / DSM 22644 / CIP 104116 / JCM 14847 / LMG 12228 / 1C / PRS 101 / PAO1).